Here is a 518-residue protein sequence, read N- to C-terminus: Cytochrome P450 monooxygenase COX1 (518 aa).

A helical transmembrane segment spans residues 7–25 (VLIALSSIVVAYFVKTALA). Residues Asn48, Asn100, Asn292, Asn302, and Asn351 are each glycosylated (N-linked (GlcNAc...) asparagine). Position 450 (Cys450) interacts with heme. A glycan (N-linked (GlcNAc...) asparagine) is linked at Asn457.

It belongs to the cytochrome P450 family. Heme is required as a cofactor.

The protein resides in the membrane. It participates in secondary metabolite biosynthesis. Functionally, cytochrome P450 monooxygenase; part of the gene cluster that mediates the biosynthesis of alpha-cuprenene and oxidized derivatives. The alpha-cuprenene synthase COP6 is the only sesquiterpene synthase identified in C.cinereus that appears to be part of a biosynthetic gene cluster and is highly specific since it catalyzes the cyclization of (2E,6E)-farnesyl diphosphate into only one product, alpha-cuprenene. The cytochrome P450 monooxygenase COX2 then oxidizes the cyclohexadiene ring of alpha-cuprenene at positions 1 and 4, yielding first alpha-cuparene, followed by alpha-cuparophenol and a further yet unidentified compound resulting from one additional oxidation step. The cytochrome P450 monooxygenase COX1 then likely catalyzes the oxidation at position 9 of the pentane ring of alpha-cuprenene to give the corresponding hydroxy or ketone derivatives. This Coprinopsis cinerea (strain Okayama-7 / 130 / ATCC MYA-4618 / FGSC 9003) (Inky cap fungus) protein is Cytochrome P450 monooxygenase COX1.